A 218-amino-acid polypeptide reads, in one-letter code: MKFFVDTADIAEIRELADTGLLDGVTTNPSLIAKSGRNFLEVVEEICGVVEGPVSAEVTALDAPTMIEEGRKLAKIAKNIAVKVPLTWDGLKTCKVLTGEGTMVNVTLCFSANQALLAAKAGATFISPFIGRLDDINLDGMELIHEIREIYDNYPALETEILAASIRSANHVKDAALAGADVATVPPAVLKGLAAHPLTDKGLEMFMADWKKTGQKIL.

Lys-83 serves as the catalytic Schiff-base intermediate with substrate.

The protein belongs to the transaldolase family. Type 3B subfamily.

It localises to the cytoplasm. The catalysed reaction is D-sedoheptulose 7-phosphate + D-glyceraldehyde 3-phosphate = D-erythrose 4-phosphate + beta-D-fructose 6-phosphate. It functions in the pathway carbohydrate degradation; pentose phosphate pathway; D-glyceraldehyde 3-phosphate and beta-D-fructose 6-phosphate from D-ribose 5-phosphate and D-xylulose 5-phosphate (non-oxidative stage): step 2/3. Functionally, transaldolase is important for the balance of metabolites in the pentose-phosphate pathway. The chain is Probable transaldolase from Parvibaculum lavamentivorans (strain DS-1 / DSM 13023 / NCIMB 13966).